The primary structure comprises 50 residues: MDDFAEFFPTLVLDEPEVARRPARDAEVLAILADAERPGGSNCTAWCVVA.

Cys47 carries the cysteine methyl ester modification. Cys47 carries S-farnesyl cysteine lipidation. Residues 48–50 constitute a propeptide, removed in mature form; sequence VVA.

Its subcellular location is the cell membrane. Activates B-regulated development. The polypeptide is Mating-type pheromone BAP1(3) (BAP1(3)) (Schizophyllum commune (Split gill fungus)).